Reading from the N-terminus, the 514-residue chain is Cytochrome P450 monooxygenase FUS8 (514 aa).

A helical membrane pass occupies residues 28 to 48 (LTVTKAVGAFIVLFIIIPKVF). N-linked (GlcNAc...) asparagine glycans are attached at residues asparagine 225 and asparagine 443. Cysteine 460 contributes to the heme binding site.

It belongs to the cytochrome P450 family. Heme serves as cofactor.

The protein resides in the membrane. It participates in mycotoxin biosynthesis. Cytochrome P450 monooxygenase; part of the gene cluster that mediates the biosynthesis of the mycotoxin fusarin C. Within the cluster, FUS1, FUS2, FUS8 and FUS9 are sufficient for fusarin production. The roles of the other FUS members are yet undetermined. The fusarin C synthetase FUS1 is responsible for the condensation of one acetyl-coenzyme A (CoA) unit with six malonyl-CoA units and the amide linkage of the arising heptaketide and homoserine, subsequently releasing the first intermediate, prefusarin, as an alcohol with an open ring structure. The cytochrome P450 monooxygenase FUS8 participates in multiple oxidation processes at carbon C-20 and is able to use the FUS1 product as substrate, resulting in formation of 20-hydroxy-prefusarin. This reaction seems to be essential before the 2-pyrrolidone ring closure can be catalyzed by FUS2, generating 20-hydroxy-fusarin. FUS8 is able to further oxidizes carbon C-20 after ring closure, resulting in the formation of carboxy-fusarin C. As the last step, FUS9 methylates the hydroxyl group at C-21 to generate fusarin C. Fusarin C can then rearrange to epi-fusarin C, the (z)-isomers, and fusarin A and fusarin D. The polypeptide is Cytochrome P450 monooxygenase FUS8 (Gibberella moniliformis (strain M3125 / FGSC 7600) (Maize ear and stalk rot fungus)).